Here is a 535-residue protein sequence, read N- to C-terminus: Ribonuclease Y 2 (535 aa).

A helical membrane pass occupies residues 1–21 (MLITGLIIGCLLIGLVIGYVV). One can recognise a KH domain in the interval 207-268 (LEHTVTVPNG…IRREVARVAL (62 aa)). In terms of domain architecture, HD spans 334-427 (VLLHSIEVAQ…VAAADAISGA (94 aa)).

The protein belongs to the RNase Y family.

It is found in the cell membrane. Endoribonuclease that initiates mRNA decay. This chain is Ribonuclease Y 2, found in Levilactobacillus brevis (strain ATCC 367 / BCRC 12310 / CIP 105137 / JCM 1170 / LMG 11437 / NCIMB 947 / NCTC 947) (Lactobacillus brevis).